The chain runs to 325 residues: MLKAPRFWYQPRSLLGGILSPFSFLYQIIVRIRRGLYAVGLKKISKFPVPIVIVGNITVGGSGKTPFVIWLANELKNRGFRPGVVSRGYGGKANRFPQTVTENSDPLQVGDEAVLLMKKIDCPMVVCRDRGAAVKHLLRNFQCDVVIGDDGLQHYSLGRDLEIALLDDRHLGNGRCLPAGPLREPKSRLNTVDFVVPKQLRPNEIYQLKNPAKKIDFNELKELTVHAVAGIGNPGYFFKQLETLGANVIAHPFRDHYFYRSEDFNFDDDHLIILTEKDAIKCKQFDDERLFCFSVDAVVPDQFQNDFFRLISNIILRKQAQREGI.

T58 to T65 contributes to the ATP binding site.

It belongs to the LpxK family.

It carries out the reaction a lipid A disaccharide + ATP = a lipid IVA + ADP + H(+). It functions in the pathway glycolipid biosynthesis; lipid IV(A) biosynthesis; lipid IV(A) from (3R)-3-hydroxytetradecanoyl-[acyl-carrier-protein] and UDP-N-acetyl-alpha-D-glucosamine: step 6/6. Its function is as follows. Transfers the gamma-phosphate of ATP to the 4'-position of a tetraacyldisaccharide 1-phosphate intermediate (termed DS-1-P) to form tetraacyldisaccharide 1,4'-bis-phosphate (lipid IVA). This Coxiella burnetii (strain Dugway 5J108-111) protein is Tetraacyldisaccharide 4'-kinase.